Reading from the N-terminus, the 77-residue chain is U8-lycotoxin-Ls1n (77 aa).

An N-terminal signal peptide occupies residues 1–20; it reads MKLMIFTGLVLFAIVSLIEA. Residues 21–26 constitute a propeptide that is removed on maturation; that stretch reads QAENEK.

Belongs to the neurotoxin 19 (CSTX) family. 08 (U8-Lctx) subfamily. In terms of processing, contains 4 disulfide bonds. Expressed by the venom gland.

Its subcellular location is the secreted. The polypeptide is U8-lycotoxin-Ls1n (Lycosa singoriensis (Wolf spider)).